Reading from the N-terminus, the 313-residue chain is Formimidoylglutamase (313 aa).

Residues histidine 130, aspartate 155, histidine 157, aspartate 159, aspartate 241, and aspartate 243 each coordinate Mn(2+).

The protein belongs to the arginase family. Mn(2+) is required as a cofactor.

It carries out the reaction N-formimidoyl-L-glutamate + H2O = formamide + L-glutamate. It functions in the pathway amino-acid degradation; L-histidine degradation into L-glutamate; L-glutamate from N-formimidoyl-L-glutamate (hydrolase route): step 1/1. Functionally, catalyzes the conversion of N-formimidoyl-L-glutamate to L-glutamate and formamide. This Salmonella paratyphi B (strain ATCC BAA-1250 / SPB7) protein is Formimidoylglutamase.